Here is a 452-residue protein sequence, read N- to C-terminus: Bone morphogenetic protein 5 (452 aa).

The N-terminal stretch at 1–25 is a signal peptide; it reads MHWTVFLLRGIVGFLWSGWVQVGYA. Positions 26-314 are excised as a propeptide; it reads KGGLGDNHVH…ASEVLLRSVR (289 aa). Asn209, Asn325, Asn343, and Asn393 each carry an N-linked (GlcNAc...) asparagine glycan. Residues 316–345 are disordered; sequence ASKRKNQNRNKSNSHQDPSRMPSAGDYNTS. Intrachain disulfides connect Cys351-Cys417, Cys380-Cys449, and Cys384-Cys451.

Belongs to the TGF-beta family. Interacts with ERFE; the interaction inhibits BMP-induced transcription of HAMP.

The protein localises to the secreted. Growth factor of the TGF-beta superfamily that plays essential roles in many developmental processes, including cartilage and bone formation or neurogenesis. Initiates the canonical BMP signaling cascade by associating with type I receptor BMPR1A and type II receptor BMPR2. In turn, BMPR1A propagates signal by phosphorylating SMAD1/5/8 that travel to the nucleus and act as activators and repressors of transcription of target genes. Can also signal through non-canonical pathway such as MAPK p38 signaling cascade to promote chondrogenic differentiation. Promotes the expression of HAMP, this is repressed by its interaction with ERFE. This is Bone morphogenetic protein 5 (Bmp5) from Mus musculus (Mouse).